Reading from the N-terminus, the 138-residue chain is Basic phospholipase A2 homolog CTs-K49a (138 aa).

The N-terminal stretch at 1-16 (MRTLWIMAVLLVVVEG) is a signal peptide. 6 disulfides stabilise this stretch: C42/C131, C44/C60, C59/C111, C65/C138, C66/C104, and C91/C102. Residues 121-133 (KKKKINLKLFCKK) are important for membrane-damaging activities in eukaryotes and bacteria; heparin-binding.

The protein belongs to the phospholipase A2 family. Group II subfamily. K49 sub-subfamily. Expressed by the venom gland.

Its subcellular location is the secreted. In terms of biological role, snake venom phospholipase A2 homolog that lacks catalytic activity. It shows myotoxic and weak anticoagulant activities. A model of myotoxic mechanism has been proposed: an apo Lys49-PLA2 is activated by the entrance of a hydrophobic molecule (e.g. fatty acid) at the hydrophobic channel of the protein leading to a reorientation of a monomer. This reorientation causes a transition between 'inactive' to 'active' states, causing alignment of C-terminal and membrane-docking sites (MDoS) side-by-side and putting the membrane-disruption sites (MDiS) in the same plane, exposed to solvent and in a symmetric position for both monomers. The MDoS region stabilizes the toxin on membrane by the interaction of charged residues with phospholipid head groups. Subsequently, the MDiS region destabilizes the membrane with penetration of hydrophobic residues. This insertion causes a disorganization of the membrane, allowing an uncontrolled influx of ions (i.e. calcium and sodium), and eventually triggering irreversible intracellular alterations and cell death. The sequence is that of Basic phospholipase A2 homolog CTs-K49a from Trimeresurus stejnegeri (Chinese green tree viper).